The following is a 171-amino-acid chain: Synaptonemal complex central element protein 2 (171 aa).

Residues 1–52 (MERHGVAAPPVELKDQEPPAIVESGEHRQSENHEETPGSVAPSASCQLPGPF) form a disordered region. A compositionally biased stretch (basic and acidic residues) spans 24-36 (SGEHRQSENHEET). 2 coiled-coil regions span residues 52–83 (FSSL…DHAL) and 118–146 (QERL…QTVE).

The protein belongs to the SYCE family. In terms of assembly, homodimer. Found in a complex with SYCP1 and SYCE1. Interacts with SYCP1 and SYCE1. Interacts with SYCE3. Interacts with TEX12. As to expression, meiotic cells (at protein level). Expressed in the ovary and testis.

The protein resides in the nucleus. Its subcellular location is the chromosome. Functionally, major component of the transverse central element of synaptonemal complexes (SCS), formed between homologous chromosomes during meiotic prophase. Requires SYCP1 in order to be incorporated into the central element. May have a role in the synaptonemal complex assembly, stabilization and recombination. This is Synaptonemal complex central element protein 2 (Syce2) from Mus musculus (Mouse).